The chain runs to 782 residues: Cysteine-rich protein 2-binding protein (782 aa).

Phosphoserine is present on S4. The interval 13–33 (RHDDEATRTSTSEGLEEGEVE) is disordered. At K231 the chain carries N6-acetyllysine. Residues 251–282 (PVESAMELKEKRSRTQEAKDIRRAQKEAAGFL) form a disordered region. Residues 256–276 (MELKEKRSRTQEAKDIRRAQK) show a composition bias toward basic and acidic residues. The residue at position 285 (S285) is a Phosphoserine. The residue at position 292 (K292) is an N6-acetyllysine. Positions 315 to 335 (LSSSDRTPLTSPSPSPSLDFS) are enriched in low complexity. Disordered regions lie at residues 315 to 346 (LSSS…HSAT) and 400 to 460 (VRKK…EPRY). Basic and acidic residues-rich tracts occupy residues 405-426 (RGPE…RMDI) and 446-459 (KPQL…KEPR). Phosphoserine is present on S416. The region spanning 638–782 (LDYCYVRPNH…KHAFFLRLRR (145 aa)) is the N-acetyltransferase domain.

As to quaternary structure, interacts with the LIM 1 domain of CSRP2. Component of the ADA2A-containing complex (ATAC), composed of CSRP2BP, KAT2A, TADA2L, TADA3L, ZZ3, MBIP, WDR5, YEATS2, CCDC101 and DR1. In the complex, it probably interacts directly with KAT2A, MBIP and WDR5. As to expression, expressed in skeletal muscle, heart, lung, placenta, brain, liver, pancreas and kidney. High expression in skeletal muscle and heart. Lower expression in lung.

Its subcellular location is the nucleus. It is found in the cytoplasm. In terms of biological role, component of the ATAC complex, a complex with histone acetyltransferase activity on histones H3 and H4. May function as a scaffold for the ATAC complex to promote ATAC complex stability. Has also weak histone acetyltransferase activity toward histone H4. Required for the normal progression through G1 and G2/M phases of the cell cycle. In Homo sapiens (Human), this protein is Cysteine-rich protein 2-binding protein.